The following is a 95-amino-acid chain: Large ribosomal subunit protein uL23 (95 aa).

It belongs to the universal ribosomal protein uL23 family. In terms of assembly, part of the 50S ribosomal subunit. Contacts protein L29, and trigger factor when it is bound to the ribosome.

In terms of biological role, one of the early assembly proteins it binds 23S rRNA. One of the proteins that surrounds the polypeptide exit tunnel on the outside of the ribosome. Forms the main docking site for trigger factor binding to the ribosome. In Anoxybacillus flavithermus (strain DSM 21510 / WK1), this protein is Large ribosomal subunit protein uL23.